Here is a 294-residue protein sequence, read N- to C-terminus: P32 adhesin (294 aa).

A run of 2 helical transmembrane segments spans residues 11–31 and 66–86; these read LVGV…VGLT and VVGA…GIGI. 2 consecutive repeat copies span residues 172-193 and 194-214. Positions 172 to 214 are 2 X 22 AA repeats; sequence GGPMQPNQMGMRPGFNQMPPQMGGMPPNQMGMRPGFNQMPPQM. Residues 234–294 form a disordered region; it reads RPGFRPQPGG…AGFPPQNGPR (61 aa). A compositionally biased stretch (gly residues) spans 241–256; it reads PGGGVPMGNKAGGGFN.

The protein resides in the cell projection. Its subcellular location is the attachment organelle membrane. Its function is as follows. Adhesin necessary for successful cytadherence and virulence. This is P32 adhesin (mgc2) from Mycoplasmoides gallisepticum (strain R(low / passage 15 / clone 2)) (Mycoplasma gallisepticum).